A 204-amino-acid chain; its full sequence is Glycerol-3-phosphate acyltransferase (204 aa).

The next 5 helical transmembrane spans lie at 8–28 (ILIF…CYIF), 53–73 (VPAA…VVIA), 81–101 (FITA…IFFG), 116–136 (FGFS…VAII), and 155–175 (VIFT…IIIL).

This sequence belongs to the PlsY family. In terms of assembly, probably interacts with PlsX.

Its subcellular location is the cell inner membrane. The enzyme catalyses an acyl phosphate + sn-glycerol 3-phosphate = a 1-acyl-sn-glycero-3-phosphate + phosphate. It participates in lipid metabolism; phospholipid metabolism. Functionally, catalyzes the transfer of an acyl group from acyl-phosphate (acyl-PO(4)) to glycerol-3-phosphate (G3P) to form lysophosphatidic acid (LPA). This enzyme utilizes acyl-phosphate as fatty acyl donor, but not acyl-CoA or acyl-ACP. In Francisella tularensis subsp. holarctica (strain FTNF002-00 / FTA), this protein is Glycerol-3-phosphate acyltransferase.